A 625-amino-acid chain; its full sequence is Sorting nexin-41 (625 aa).

The disordered stretch occupies residues 1 to 90; sequence MDYNIFEAVH…STSSHAVVEA (90 aa). A compositionally biased stretch (low complexity) spans 54-86; sequence SPPSSSSLPSSPAHSSSAGSSRASTSSSTSSHA. One can recognise a PX domain in the interval 98–235; sequence VSLSMSTTAT…QKFLNPEFNW (138 aa). The a 1,2-diacyl-sn-glycero-3-phospho-(1D-myo-inositol-3-phosphate) site is built by Arg-153, Ser-155, Lys-179, and Arg-202. Coiled coils occupy residues 437–469 and 539–563; these read QFKILERLIIEKETKLSSLTEIENQLQKINESL and QLTEQERSKQIKQLNQDLSKLKDCL.

The protein belongs to the sorting nexin family. As to quaternary structure, binds to SNX4.

It localises to the prevacuolar compartment. Its subcellular location is the endosome. It is found in the endosome membrane. Involved in proper sorting of the v-SNARE protein SNC1. The sequence is that of Sorting nexin-41 (SNX41) from Saccharomyces cerevisiae (strain ATCC 204508 / S288c) (Baker's yeast).